The chain runs to 615 residues: Alpha-terpinene synthase TPS33PK, chloroplastic (615 aa).

The transit peptide at 1-33 (MFCRLGVHQFSPLSLILNTTKLARASTLSSACY) directs the protein to the chloroplast. (2E)-geranyl diphosphate contacts are provided by glutamate 334, valine 371, leucine 375, leucine 513, and serine 516. Positions 371 and 375 each coordinate Mg(2+). A DDXXD motif motif is present at residues 371–375 (VYGTL). Serine 516, methionine 520, and aspartate 524 together coordinate Mg(2+).

Belongs to the terpene synthase family. Tpsb subfamily. It depends on Mg(2+) as a cofactor. Requires Mn(2+) as cofactor.

The protein resides in the plastid. It localises to the chloroplast. The catalysed reaction is (2E)-geranyl diphosphate = alpha-terpinene + diphosphate. It catalyses the reaction (2E)-geranyl diphosphate = gamma-terpinene + diphosphate. It functions in the pathway secondary metabolite biosynthesis; terpenoid biosynthesis. Its function is as follows. Involved in monoterpene (C10) olefins biosynthesis, constituants of cannabinoids and terpenoids-rich resins. Catalyzes mainly the conversion of (2E)-geranyl diphosphate to alpha-terpinene and gamma-terpinene. The protein is Alpha-terpinene synthase TPS33PK, chloroplastic of Cannabis sativa (Hemp).